A 729-amino-acid chain; its full sequence is Catalase-peroxidase 1 (729 aa).

The segment at residues 98–226 (WHSAGSYRIA…LAAVMMGLIY (129 aa)) is a cross-link (tryptophyl-tyrosyl-methioninium (Trp-Tyr) (with M-252)). Residue His-99 is the Proton acceptor of the active site. The tryptophyl-tyrosyl-methioninium (Tyr-Met) (with W-98) cross-link spans 226–252 (YVNPEGVDGNPDPLRTAKDIRETFARM). His-267 is a heme b binding site.

This sequence belongs to the peroxidase family. Peroxidase/catalase subfamily. Homodimer or homotetramer. Requires heme b as cofactor. Formation of the three residue Trp-Tyr-Met cross-link is important for the catalase, but not the peroxidase activity of the enzyme.

The enzyme catalyses H2O2 + AH2 = A + 2 H2O. It carries out the reaction 2 H2O2 = O2 + 2 H2O. Bifunctional enzyme with both catalase and broad-spectrum peroxidase activity. The chain is Catalase-peroxidase 1 from Cellvibrio japonicus (strain Ueda107) (Pseudomonas fluorescens subsp. cellulosa).